The chain runs to 425 residues: Dihydroorotase (425 aa).

Zn(2+)-binding residues include H61 and H63. Substrate contacts are provided by residues 63-65 and N95; that span reads HLR. Zn(2+)-binding residues include D153, H180, and H233. N279 contacts substrate. D306 contributes to the Zn(2+) binding site. Residue D306 is part of the active site. H310 contributes to the substrate binding site.

It belongs to the metallo-dependent hydrolases superfamily. DHOase family. Class I DHOase subfamily. It depends on Zn(2+) as a cofactor.

It carries out the reaction (S)-dihydroorotate + H2O = N-carbamoyl-L-aspartate + H(+). Its pathway is pyrimidine metabolism; UMP biosynthesis via de novo pathway; (S)-dihydroorotate from bicarbonate: step 3/3. Functionally, catalyzes the reversible cyclization of carbamoyl aspartate to dihydroorotate. In Geobacter sp. (strain M21), this protein is Dihydroorotase.